Here is a 796-residue protein sequence, read N- to C-terminus: Lon protease (796 aa).

In terms of domain architecture, Lon N-terminal spans L19–P213. Residue G376 to T383 coordinates ATP. In terms of domain architecture, Lon proteolytic spans E612–N793. Residues S699 and K742 contribute to the active site.

This sequence belongs to the peptidase S16 family. Homohexamer. Organized in a ring with a central cavity.

Its subcellular location is the cytoplasm. It catalyses the reaction Hydrolysis of proteins in presence of ATP.. ATP-dependent serine protease that mediates the selective degradation of mutant and abnormal proteins as well as certain short-lived regulatory proteins. Required for cellular homeostasis and for survival from DNA damage and developmental changes induced by stress. Degrades polypeptides processively to yield small peptide fragments that are 5 to 10 amino acids long. Binds to DNA in a double-stranded, site-specific manner. This Mycoplasma mycoides subsp. mycoides SC (strain CCUG 32753 / NCTC 10114 / PG1) protein is Lon protease.